The chain runs to 267 residues: Proteasome subunit alpha (267 aa).

A disordered region spans residues 231–267 (ETLLQERDSKESAESEEPIESEEGKKTGKKSDADSSD). 2 stretches are compositionally biased toward basic and acidic residues: residues 234–243 (LQERDSKESA) and 252–267 (EEGK…DSSD).

Belongs to the peptidase T1A family. In terms of assembly, the 20S proteasome core is composed of 14 alpha and 14 beta subunits that assemble into four stacked heptameric rings, resulting in a barrel-shaped structure. The two inner rings, each composed of seven catalytic beta subunits, are sandwiched by two outer rings, each composed of seven alpha subunits. The catalytic chamber with the active sites is on the inside of the barrel. Has a gated structure, the ends of the cylinder being occluded by the N-termini of the alpha-subunits. Is capped by the proteasome-associated ATPase, ARC.

Its subcellular location is the cytoplasm. It functions in the pathway protein degradation; proteasomal Pup-dependent pathway. With respect to regulation, the formation of the proteasomal ATPase ARC-20S proteasome complex, likely via the docking of the C-termini of ARC into the intersubunit pockets in the alpha-rings, may trigger opening of the gate for substrate entry. Interconversion between the open-gate and close-gate conformations leads to a dynamic regulation of the 20S proteasome proteolysis activity. Functionally, component of the proteasome core, a large protease complex with broad specificity involved in protein degradation. The protein is Proteasome subunit alpha of Mycobacterium ulcerans (strain Agy99).